The following is a 732-amino-acid chain: Catalase-peroxidase (732 aa).

Positions Met1–Met23 are disordered. The tryptophyl-tyrosyl-methioninium (Trp-Tyr) (with M-246) cross-link spans Trp97–Tyr220. His98 acts as the Proton acceptor in catalysis. Residues Tyr220–Met246 constitute a cross-link (tryptophyl-tyrosyl-methioninium (Tyr-Met) (with W-97)). His261 is a binding site for heme b.

It belongs to the peroxidase family. Peroxidase/catalase subfamily. In terms of assembly, homodimer or homotetramer. Heme b is required as a cofactor. Formation of the three residue Trp-Tyr-Met cross-link is important for the catalase, but not the peroxidase activity of the enzyme.

It carries out the reaction H2O2 + AH2 = A + 2 H2O. The enzyme catalyses 2 H2O2 = O2 + 2 H2O. Functionally, bifunctional enzyme with both catalase and broad-spectrum peroxidase activity. This chain is Catalase-peroxidase, found in Chlorobium limicola (strain DSM 245 / NBRC 103803 / 6330).